Reading from the N-terminus, the 700-residue chain is MSTKNLLLELFVEELPPKALKKIGEAFAQTLQASLQTQGLLSADSVLTAFASPRRLGVHLTKVLEQADDKTVMQKLMPAAVGIGADGKATPALLKKLAALGADESAVAGLKRESDGKAEVLFFNSVVTGVMLTDGLQKALEETLGKLPIPKVMAYQLADGWETVNFVRPAHGLVALYGADVLNISVLGLHAGNTTHGHRFEAGIDPVYIRDADSYAKQIATEGAVIASFAERRAEIVRQLASAAAEAGSNLTPIEDEALLDEVTGLVERPNVLIGQFEEAFLEVPQECLILTMKANQKYFPLLDSKGGLSNKFLIVSNIRPADASTVIGGNERVVRPRLADAKFFFDQDRKKTLMSRVAGLDKVVYHNKLGTQGERIARVRAIAQAIAGKLGVDAQQADTAAQLAKADLLTDMVGEFPELQGIMGRYYALHDGLPAAVADAIEDHYKPRFAGDELPRNPVGMVVALADKLETLVGLFSIGQVPTGDKDPFALRRHALGIIRMLIEGKLDIGINDLITAAEKPFNGLSAEHRSALLNFIFDRLANALREQGYSAQEIDAVLALQPQRLADVAERLAAVRAFAALPEAASLAAANKRVGNILKKVEGTVAAQVDTALLKEPAEIALNQTLTTVKPQAEAAFARGDYTASLQALAALRNPVDAFFDGVMVNAEDIALRNNRQGLLATLHQAMNQVADISKLAA.

The protein belongs to the class-II aminoacyl-tRNA synthetase family. In terms of assembly, tetramer of two alpha and two beta subunits.

It localises to the cytoplasm. It carries out the reaction tRNA(Gly) + glycine + ATP = glycyl-tRNA(Gly) + AMP + diphosphate. The sequence is that of Glycine--tRNA ligase beta subunit from Janthinobacterium sp. (strain Marseille) (Minibacterium massiliensis).